Here is a 571-residue protein sequence, read N- to C-terminus: Proline--tRNA ligase (571 aa).

Belongs to the class-II aminoacyl-tRNA synthetase family. ProS type 1 subfamily. As to quaternary structure, homodimer.

The protein localises to the cytoplasm. It carries out the reaction tRNA(Pro) + L-proline + ATP = L-prolyl-tRNA(Pro) + AMP + diphosphate. Functionally, catalyzes the attachment of proline to tRNA(Pro) in a two-step reaction: proline is first activated by ATP to form Pro-AMP and then transferred to the acceptor end of tRNA(Pro). As ProRS can inadvertently accommodate and process non-cognate amino acids such as alanine and cysteine, to avoid such errors it has two additional distinct editing activities against alanine. One activity is designated as 'pretransfer' editing and involves the tRNA(Pro)-independent hydrolysis of activated Ala-AMP. The other activity is designated 'posttransfer' editing and involves deacylation of mischarged Ala-tRNA(Pro). The misacylated Cys-tRNA(Pro) is not edited by ProRS. In Pseudomonas putida (strain W619), this protein is Proline--tRNA ligase.